Consider the following 168-residue polypeptide: N-alpha-acetyltransferase 50 (168 aa).

An N-acetyltransferase domain is found at 5-154 (IELGDVTPHN…DAHVLQKSLR (150 aa)). Tyr30 contacts substrate. Tyr72 is a catalytic residue. Met74 serves as a coordination point for substrate. 76-89 (LGCLAPYRRLGIGT) contributes to the acetyl-CoA binding site. His111 is an active-site residue. Position 116–125 (116–125 (NESAIDFYQK)) interacts with CoA. The segment at 137-140 (YYKR) is substrate.

The protein belongs to the acetyltransferase family. GNAT subfamily. In terms of assembly, interacts with naa35.

The protein resides in the cytoplasm. It is found in the nucleus. It carries out the reaction N-terminal L-methionyl-L-alanyl-[protein] + acetyl-CoA = N-terminal N(alpha)-acetyl-L-methionyl-L-alanyl-[protein] + CoA + H(+). It catalyses the reaction N-terminal L-methionyl-L-seryl-[protein] + acetyl-CoA = N-terminal N(alpha)-acetyl-L-methionyl-L-seryl-[protein] + CoA + H(+). The enzyme catalyses N-terminal L-methionyl-L-valyl-[protein] + acetyl-CoA = N-terminal N(alpha)-acetyl-L-methionyl-L-valyl-[protein] + CoA + H(+). The catalysed reaction is N-terminal L-methionyl-L-threonyl-[protein] + acetyl-CoA = N-terminal N(alpha)-acetyl-L-methionyl-L-threonyl-[protein] + CoA + H(+). It carries out the reaction N-terminal L-methionyl-L-lysyl-[protein] + acetyl-CoA = N-terminal N(alpha)-acetyl-L-methionyl-L-lysyl-[protein] + CoA + H(+). It catalyses the reaction N-terminal L-methionyl-L-leucyl-[protein] + acetyl-CoA = N-terminal N(alpha)-acetyl-L-methionyl-L-leucyl-[protein] + CoA + H(+). The enzyme catalyses N-terminal L-methionyl-L-phenylalanyl-[protein] + acetyl-CoA = N-terminal N(alpha)-acetyl-L-methionyl-L-phenylalanyl-[protein] + CoA + H(+). The catalysed reaction is N-terminal L-methionyl-L-tyrosyl-[protein] + acetyl-CoA = N-terminal N(alpha)-acetyl-L-methionyl-L-tyrosyl-[protein] + CoA + H(+). Functionally, N-alpha-acetyltransferase that acetylates the N-terminus of proteins that retain their initiating methionine. Has a broad substrate specificity: able to acetylate the initiator methionine of most peptides, except for those with a proline in second position. Also displays N-epsilon-acetyltransferase activity by mediating acetylation of the side chain of specific lysines on proteins. The relevance of N-epsilon-acetyltransferase activity is however unclear. Required for sister chromatid cohesion during mitosis by promoting binding of CDCA5/sororin to cohesin. Essential in embryonic cell proliferation and survival. This Danio rerio (Zebrafish) protein is N-alpha-acetyltransferase 50 (naa50).